The primary structure comprises 143 residues: Nucleoside diphosphate kinase (143 aa).

6 residues coordinate ATP: lysine 11, phenylalanine 59, arginine 87, threonine 93, arginine 104, and asparagine 114. Histidine 117 functions as the Pros-phosphohistidine intermediate in the catalytic mechanism.

This sequence belongs to the NDK family. As to quaternary structure, homotetramer. It depends on Mg(2+) as a cofactor.

It is found in the cytoplasm. It carries out the reaction a 2'-deoxyribonucleoside 5'-diphosphate + ATP = a 2'-deoxyribonucleoside 5'-triphosphate + ADP. It catalyses the reaction a ribonucleoside 5'-diphosphate + ATP = a ribonucleoside 5'-triphosphate + ADP. Functionally, major role in the synthesis of nucleoside triphosphates other than ATP. The ATP gamma phosphate is transferred to the NDP beta phosphate via a ping-pong mechanism, using a phosphorylated active-site intermediate. This is Nucleoside diphosphate kinase from Clostridium perfringens (strain SM101 / Type A).